The sequence spans 138 residues: Large ribosomal subunit protein uL16 (138 aa).

The disordered stretch occupies residues 1–29 (MSLLQPRKVKWRKPQKGRTKGKATRRNQV). Residues 7–25 (RKVKWRKPQKGRTKGKATR) are compositionally biased toward basic residues.

The protein belongs to the universal ribosomal protein uL16 family. In terms of assembly, part of the 50S ribosomal subunit.

Its function is as follows. Binds 23S rRNA and is also seen to make contacts with the A and possibly P site tRNAs. The protein is Large ribosomal subunit protein uL16 of Sulfurihydrogenibium sp. (strain YO3AOP1).